The chain runs to 645 residues: 1-deoxy-D-xylulose-5-phosphate synthase (645 aa).

Residues His87 and 128–130 (GHS) contribute to the thiamine diphosphate site. Residue Asp159 participates in Mg(2+) binding. Thiamine diphosphate-binding positions include 160 to 161 (GA), Asn188, Phe295, and Glu384. Residue Asn188 coordinates Mg(2+).

This sequence belongs to the transketolase family. DXPS subfamily. Homodimer. Mg(2+) is required as a cofactor. The cofactor is thiamine diphosphate.

The enzyme catalyses D-glyceraldehyde 3-phosphate + pyruvate + H(+) = 1-deoxy-D-xylulose 5-phosphate + CO2. Its pathway is metabolic intermediate biosynthesis; 1-deoxy-D-xylulose 5-phosphate biosynthesis; 1-deoxy-D-xylulose 5-phosphate from D-glyceraldehyde 3-phosphate and pyruvate: step 1/1. Its function is as follows. Catalyzes the acyloin condensation reaction between C atoms 2 and 3 of pyruvate and glyceraldehyde 3-phosphate to yield 1-deoxy-D-xylulose-5-phosphate (DXP). This chain is 1-deoxy-D-xylulose-5-phosphate synthase, found in Alcanivorax borkumensis (strain ATCC 700651 / DSM 11573 / NCIMB 13689 / SK2).